A 332-amino-acid chain; its full sequence is 4-hydroxythreonine-4-phosphate dehydrogenase (332 aa).

2 residues coordinate substrate: His136 and Thr137. His166, His211, and His266 together coordinate a divalent metal cation. The substrate site is built by Lys274, Asn283, and Arg292.

This sequence belongs to the PdxA family. As to quaternary structure, homodimer. Requires Zn(2+) as cofactor. It depends on Mg(2+) as a cofactor. Co(2+) is required as a cofactor.

Its subcellular location is the cytoplasm. The catalysed reaction is 4-(phosphooxy)-L-threonine + NAD(+) = 3-amino-2-oxopropyl phosphate + CO2 + NADH. The protein operates within cofactor biosynthesis; pyridoxine 5'-phosphate biosynthesis; pyridoxine 5'-phosphate from D-erythrose 4-phosphate: step 4/5. Functionally, catalyzes the NAD(P)-dependent oxidation of 4-(phosphooxy)-L-threonine (HTP) into 2-amino-3-oxo-4-(phosphooxy)butyric acid which spontaneously decarboxylates to form 3-amino-2-oxopropyl phosphate (AHAP). The polypeptide is 4-hydroxythreonine-4-phosphate dehydrogenase (Wigglesworthia glossinidia brevipalpis).